The following is a 713-amino-acid chain: Transcription activator of gluconeogenesis CPC735_053490 (713 aa).

The disordered stretch occupies residues 1 to 70 (MTANAINGPV…NAKDPLRPRR (70 aa)). A compositionally biased stretch (polar residues) spans 19 to 56 (GDNNKSADTTMADQGTRPESQPQGQNNGAKPQNGQTKP). A DNA-binding region (zn(2)-C6 fungal-type) is located at residues 77-105 (CFACQRAHLTCGDERPCQRCIKRGIQNAC). The segment covering 145–159 (PLTRNGSNSKTNFYP) has biased composition (polar residues). Disordered stretches follow at residues 145–229 (PLTR…ASGQ), 274–318 (GAGE…LFGD), 541–564 (GGSSGAMSGVTSRGSFTPRTGMDI), and 623–665 (GTTS…QRKW). A compositionally biased stretch (low complexity) spans 160–171 (QQQSSFNNFYQN). A compositionally biased stretch (polar residues) spans 191-212 (FPSQSPVSPTFNMTANPAASGN). The segment covering 213-229 (QGLPSSLSASNSNASGQ) has biased composition (low complexity). Polar residues-rich tracts occupy residues 295–312 (SGTYTAGSNFGESPTGQP), 541–558 (GGSSGAMSGVTSRGSFTP), and 649–659 (GASNGQSQHSL).

The protein belongs to the ERT1/acuK family.

It is found in the nucleus. In terms of biological role, transcription factor which regulates nonfermentable carbon utilization. Activator of gluconeogenetic genes. The chain is Transcription activator of gluconeogenesis CPC735_053490 from Coccidioides posadasii (strain C735) (Valley fever fungus).